The primary structure comprises 355 residues: S-adenosylmethionine:tRNA ribosyltransferase-isomerase (355 aa).

This sequence belongs to the QueA family. In terms of assembly, monomer.

The protein resides in the cytoplasm. It carries out the reaction 7-aminomethyl-7-carbaguanosine(34) in tRNA + S-adenosyl-L-methionine = epoxyqueuosine(34) in tRNA + adenine + L-methionine + 2 H(+). The protein operates within tRNA modification; tRNA-queuosine biosynthesis. In terms of biological role, transfers and isomerizes the ribose moiety from AdoMet to the 7-aminomethyl group of 7-deazaguanine (preQ1-tRNA) to give epoxyqueuosine (oQ-tRNA). The protein is S-adenosylmethionine:tRNA ribosyltransferase-isomerase of Pectobacterium atrosepticum (strain SCRI 1043 / ATCC BAA-672) (Erwinia carotovora subsp. atroseptica).